The sequence spans 103 residues: Acyl-CoA-binding protein (103 aa).

One can recognise an ACB domain in the interval 18 to 103 (HQADFDEAAE…AKTMVEKYGI (86 aa)). An acyl-CoA is bound by residues Lys30, 45–49 (YGFYK), Lys67, Lys71, and Tyr90.

The protein belongs to the ACBP family. In terms of assembly, monomer.

It is found in the endoplasmic reticulum. The protein resides in the golgi apparatus. Binds medium- and long-chain acyl-CoA esters with very high affinity and may function as an intracellular carrier of acyl-CoA esters. It is also able to displace diazepam from the benzodiazepine (BZD) recognition site located on the GABA type A receptor. It is therefore possible that this protein also acts as a neuropeptide to modulate the action of the GABA receptor. The sequence is that of Acyl-CoA-binding protein (DBI) from Anas platyrhynchos (Mallard).